Consider the following 364-residue polypeptide: Phosphoserine aminotransferase (364 aa).

Arginine 46 contributes to the L-glutamate binding site. Pyridoxal 5'-phosphate contacts are provided by residues 80–81, tryptophan 106, threonine 157, aspartate 176, and glutamine 199; that span reads AR. The residue at position 200 (lysine 200) is an N6-(pyridoxal phosphate)lysine. A pyridoxal 5'-phosphate-binding site is contributed by 241 to 242; the sequence is NT.

It belongs to the class-V pyridoxal-phosphate-dependent aminotransferase family. SerC subfamily. As to quaternary structure, homodimer. The cofactor is pyridoxal 5'-phosphate.

The protein resides in the cytoplasm. The enzyme catalyses O-phospho-L-serine + 2-oxoglutarate = 3-phosphooxypyruvate + L-glutamate. It catalyses the reaction 4-(phosphooxy)-L-threonine + 2-oxoglutarate = (R)-3-hydroxy-2-oxo-4-phosphooxybutanoate + L-glutamate. Its pathway is amino-acid biosynthesis; L-serine biosynthesis; L-serine from 3-phospho-D-glycerate: step 2/3. It participates in cofactor biosynthesis; pyridoxine 5'-phosphate biosynthesis; pyridoxine 5'-phosphate from D-erythrose 4-phosphate: step 3/5. Functionally, catalyzes the reversible conversion of 3-phosphohydroxypyruvate to phosphoserine and of 3-hydroxy-2-oxo-4-phosphonooxybutanoate to phosphohydroxythreonine. The chain is Phosphoserine aminotransferase from Vibrio cholerae serotype O1 (strain ATCC 39315 / El Tor Inaba N16961).